The chain runs to 169 residues: Peptide methionine sulfoxide reductase MsrA (169 aa).

Cys-13 is a catalytic residue.

Belongs to the MsrA Met sulfoxide reductase family.

The catalysed reaction is L-methionyl-[protein] + [thioredoxin]-disulfide + H2O = L-methionyl-(S)-S-oxide-[protein] + [thioredoxin]-dithiol. It carries out the reaction [thioredoxin]-disulfide + L-methionine + H2O = L-methionine (S)-S-oxide + [thioredoxin]-dithiol. In terms of biological role, has an important function as a repair enzyme for proteins that have been inactivated by oxidation. Catalyzes the reversible oxidation-reduction of methionine sulfoxide in proteins to methionine. The sequence is that of Peptide methionine sulfoxide reductase MsrA from Mycolicibacterium vanbaalenii (strain DSM 7251 / JCM 13017 / BCRC 16820 / KCTC 9966 / NRRL B-24157 / PYR-1) (Mycobacterium vanbaalenii).